The following is a 908-amino-acid chain: AdoMet-dependent rRNA methyltransferase SPB1 (908 aa).

S-adenosyl-L-methionine-binding residues include Gly-57, Trp-59, Asp-77, Asp-93, and Asp-118. The active-site Proton acceptor is the Lys-158. Residues Met-378–Thr-422 are a coiled coil. Disordered stretches follow at residues Ile-440–Tyr-513, Asn-535–Lys-715, and Ala-806–Arg-841. The segment covering Asp-464–Glu-493 has biased composition (acidic residues). Residues Asn-535–Lys-545 are compositionally biased toward basic and acidic residues. Acidic residues-rich tracts occupy residues Ser-546–Gly-564 and Asp-579–Thr-591. Basic and acidic residues predominate over residues Glu-592 to Lys-610. Acidic residues-rich tracts occupy residues Asp-650–Ser-678 and Glu-685–Asp-712. The segment covering Ala-816–Gly-827 has biased composition (basic and acidic residues).

It belongs to the class I-like SAM-binding methyltransferase superfamily. RNA methyltransferase RlmE family. SPB1 subfamily. As to quaternary structure, component of the nucleolar and nucleoplasmic pre-60S ribosomal particle.

The protein resides in the nucleus. Its subcellular location is the nucleolus. It carries out the reaction a ribonucleotide in rRNA + S-adenosyl-L-methionine = a 2'-O-methylribonucleotide in rRNA + S-adenosyl-L-homocysteine + H(+). In terms of biological role, required for proper assembly of pre-ribosomal particles during the biogenesis of the 60S ribosomal subunit. The protein is AdoMet-dependent rRNA methyltransferase SPB1 of Cryptococcus neoformans var. neoformans serotype D (strain B-3501A) (Filobasidiella neoformans).